A 339-amino-acid polypeptide reads, in one-letter code: MARIIALDGAQGEGGGQILRSALSLSMITGQPFEMSDIRAGRAKPGLLRQHLTAVRAATEICGAQVNGDELGSQQLRFTPGPIRGGEYRFAIGSAGSCMLVLQTVLPALWFADGSSRVEVHGGTHNQAAPSADFICRVWEPLLARMGISQRTTLIKHGFYPAGGGAAATVVEPATSLRGLTLISRGETLRTTAEALLAAVPYHVGEREVATLEAHFPLAEKNVVALEGGCGPGNALLLMIQSEQLTELFAAFGVKGTSAEAVANQVAHEARRYLASPAAVGEHLADQLILPLALAGEGAFTVARASAHLLTNIAVVERFLPVRFSCEATESGYLVRVSD.

Residues glutamine 103 and 283–287 (HLADQ) each bind ATP. The active-site Tele-AMP-histidine intermediate is histidine 308.

It belongs to the RNA 3'-terminal cyclase family. Type 1 subfamily.

It is found in the cytoplasm. The enzyme catalyses a 3'-end 3'-phospho-ribonucleotide-RNA + ATP = a 3'-end 2',3'-cyclophospho-ribonucleotide-RNA + AMP + diphosphate. Its function is as follows. Catalyzes the conversion of 3'-phosphate to a 2',3'-cyclic phosphodiester at the end of RNA. The mechanism of action of the enzyme occurs in 3 steps: (A) adenylation of the enzyme by ATP; (B) transfer of adenylate to an RNA-N3'P to produce RNA-N3'PP5'A; (C) and attack of the adjacent 2'-hydroxyl on the 3'-phosphorus in the diester linkage to produce the cyclic end product. The biological role of this enzyme is unknown but it is likely to function in some aspects of cellular RNA processing. This Salmonella enteritidis PT4 (strain P125109) protein is RNA 3'-terminal phosphate cyclase.